The following is a 227-amino-acid chain: Translation initiation factor 6 (227 aa).

Belongs to the eIF-6 family.

Functionally, binds to the 50S ribosomal subunit and prevents its association with the 30S ribosomal subunit to form the 70S initiation complex. The protein is Translation initiation factor 6 of Pyrococcus abyssi (strain GE5 / Orsay).